Here is a 299-residue protein sequence, read N- to C-terminus: N-acetylmuramic acid 6-phosphate etherase (299 aa).

Residues Ile57–Lys220 enclose the SIS domain. The active-site Proton donor is the Glu85. Glu116 is an active-site residue.

It belongs to the GCKR-like family. MurNAc-6-P etherase subfamily. Homodimer.

The enzyme catalyses N-acetyl-D-muramate 6-phosphate + H2O = N-acetyl-D-glucosamine 6-phosphate + (R)-lactate. The protein operates within amino-sugar metabolism; 1,6-anhydro-N-acetylmuramate degradation. It functions in the pathway amino-sugar metabolism; N-acetylmuramate degradation. Its pathway is cell wall biogenesis; peptidoglycan recycling. In terms of biological role, specifically catalyzes the cleavage of the D-lactyl ether substituent of MurNAc 6-phosphate, producing GlcNAc 6-phosphate and D-lactate. Together with AnmK, is also required for the utilization of anhydro-N-acetylmuramic acid (anhMurNAc) either imported from the medium or derived from its own cell wall murein, and thus plays a role in cell wall recycling. The chain is N-acetylmuramic acid 6-phosphate etherase from Psychromonas ingrahamii (strain DSM 17664 / CCUG 51855 / 37).